A 533-amino-acid chain; its full sequence is MAQSQVGKGSPSNATFRDKEKPQEVRKSNILAARAVSDAIRTSLGPKGMDKMIKTKNGEIIISNDGATILKHMAVLHPAARMLVDVSAAQDVEAGDGTTSVAILTGSLLGAAEKLLNKGIHPTLISESFQRAATRSAEVLLEMSHKISLDDKEALIRAASTSLSSKIVSQHSSLLSPLAVNSVLKVMNEEHTNVDLNDIRLIKKVGGTIDETELVNGVVLTQNVVKTAGGPVRVDKAKIALIQFQLSPPKPDMENNVVVNDYRQMDKILKEERAYLLNICKKIKKSKCNVLLIQKSILRDAVNDLALHFLSKLNIMVIKDIERDEIEFLSKATGCKPIADIDNFTEDRLGSADVVEEIESSGSRIVKIDGVSAKNVKPTVSIVCRGANQLVLDETERSIHDALCVVRCLVKEKALIAGGGAPEIEVSRVLMSEANKLSGVEQFVYQEFAQALEVIPTTLAENAGLNSINVVTDLRNRHANGEKNAGISVRRSGASNTYDEHVLQPVLVSSSAITLASECVKSILRIDDIAFSR.

Over residues 1-15 (MAQSQVGKGSPSNAT) the composition is skewed to polar residues. Residues 1-25 (MAQSQVGKGSPSNATFRDKEKPQEV) form a disordered region. The span at 16 to 25 (FRDKEKPQEV) shows a compositional bias: basic and acidic residues.

This sequence belongs to the TCP-1 chaperonin family. In terms of assembly, heterooligomeric complex of about 850 to 900 kDa that forms two stacked rings, 12 to 16 nm in diameter.

It is found in the cytoplasm. In terms of biological role, molecular chaperone; assists the folding of proteins upon ATP hydrolysis. Known to play a role, in vitro, in the folding of actin and tubulin. This Debaryomyces hansenii (strain ATCC 36239 / CBS 767 / BCRC 21394 / JCM 1990 / NBRC 0083 / IGC 2968) (Yeast) protein is T-complex protein 1 subunit delta (CCT4).